Here is a 210-residue protein sequence, read N- to C-terminus: Calcium-activated potassium channel subunit beta-4 (210 aa).

The Cytoplasmic portion of the chain corresponds to 1–19 (MAKLRVSYEYTEAEDKSIR). Residues 20–40 (LGLFLIVSGILSLFIFGFCWL) form a helical membrane-spanning segment. Residues 41–167 (SPALQDLQAT…DVLLQRTHDE (127 aa)) are Extracellular-facing. N-linked (GlcNAc...) asparagine glycans are attached at residues asparagine 53 and asparagine 90. A helical transmembrane segment spans residues 168–188 (IVLLHCFLWPVVAFVVGVLIV). Residues 189–210 (VLTICAKSLAVKAEAMKKRKFS) are Cytoplasmic-facing.

It belongs to the KCNMB (TC 8.A.14.1) family. KCNMB4 subfamily. As to quaternary structure, interacts with KCNMA1 tetramer. There are probably 4 molecules of KCMNB4 per KCNMA1 tetramer. Interacts with FMR1 (via N-terminus). Phosphorylated. Phosphorylation modulates its effect on KCNMA1 activation kinetics. Post-translationally, N-glycosylated. A highly glycosylated form is promoted by KCNMA1. Glycosylation, which is not required for the interaction with KCNMA1 and subcellular location, increases protection against charybdotoxin.

Its subcellular location is the membrane. Regulatory subunit of the calcium activated potassium KCNMA1 (maxiK) channel. Modulates the calcium sensitivity and gating kinetics of KCNMA1, thereby contributing to KCNMA1 channel diversity. Decreases the gating kinetics and calcium sensitivity of the KCNMA1 channel, but with fast deactivation kinetics. May decrease KCNMA1 channel openings at low calcium concentrations but increases channel openings at high calcium concentrations. Makes KCNMA1 channel resistant to 100 nM charybdotoxin (CTX) toxin concentrations. The chain is Calcium-activated potassium channel subunit beta-4 (Kcnmb4) from Rattus norvegicus (Rat).